Here is a 211-residue protein sequence, read N- to C-terminus: MARVRIRQHVNPLSEKYRQVLACPDWATVYDDVQRPLHLDIGCARGRFPLKMAQQHPDWNFLGVEIRQPLVLEANETGDRLGLKNLHYLFGNINVEPEKFFSAFPPTLQRVSIQFPDPWFKQRHNKRRVAQPELVTAIANALPPGGEVLLQSDVEPVAQDMRDRFAENDNFVFTHDTPWLAENPLGVPTEREIACFNLQRPVYRCLLQRTP.

4 residues coordinate S-adenosyl-L-methionine: Asp40, Glu65, Asn92, and Asp117. Asp117 is a catalytic residue. Substrate is bound at residue Lys121. The segment at 123 to 128 (RHNKRR) is interaction with RNA. Asp153 contacts substrate.

It belongs to the class I-like SAM-binding methyltransferase superfamily. TrmB family.

It carries out the reaction guanosine(46) in tRNA + S-adenosyl-L-methionine = N(7)-methylguanosine(46) in tRNA + S-adenosyl-L-homocysteine. It functions in the pathway tRNA modification; N(7)-methylguanine-tRNA biosynthesis. Catalyzes the formation of N(7)-methylguanine at position 46 (m7G46) in tRNA. In Synechocystis sp. (strain ATCC 27184 / PCC 6803 / Kazusa), this protein is tRNA (guanine-N(7)-)-methyltransferase.